A 374-amino-acid polypeptide reads, in one-letter code: Putative F-box protein At5g60060 (374 aa).

Residues 9 to 61 enclose the F-box domain; sequence SQWSDLPLDILELISDRLDHDSSDTIHLLCLRSVCATWRLSLPLSNKNNRLSK.

The protein is Putative F-box protein At5g60060 of Arabidopsis thaliana (Mouse-ear cress).